A 347-amino-acid chain; its full sequence is NADH-quinone oxidoreductase subunit H (347 aa).

8 helical membrane-spanning segments follow: residues 21 to 41 (VAGI…IIYA), 87 to 107 (GLFL…WAVI), 118 to 138 (INVG…GVIL), 157 to 177 (AQMI…VLFA), 195 to 215 (GIVN…MFLI), 258 to 278 (NVLL…LPPI), 283 to 303 (LYAV…FFVF), and 323 to 343 (WKIF…YLML).

This sequence belongs to the complex I subunit 1 family. In terms of assembly, NDH-1 is composed of 14 different subunits. Subunits NuoA, H, J, K, L, M, N constitute the membrane sector of the complex.

Its subcellular location is the cell inner membrane. It catalyses the reaction a quinone + NADH + 5 H(+)(in) = a quinol + NAD(+) + 4 H(+)(out). In terms of biological role, NDH-1 shuttles electrons from NADH, via FMN and iron-sulfur (Fe-S) centers, to quinones in the respiratory chain. The immediate electron acceptor for the enzyme in this species is believed to be ubiquinone. Couples the redox reaction to proton translocation (for every two electrons transferred, four hydrogen ions are translocated across the cytoplasmic membrane), and thus conserves the redox energy in a proton gradient. This subunit may bind ubiquinone. This chain is NADH-quinone oxidoreductase subunit H, found in Sphingopyxis alaskensis (strain DSM 13593 / LMG 18877 / RB2256) (Sphingomonas alaskensis).